A 225-amino-acid polypeptide reads, in one-letter code: Chlorosome protein J (225 aa).

In terms of domain architecture, 2Fe-2S ferredoxin-type spans 1 to 95 (MIIYINDKPC…TIRVLTRAEK (95 aa)). Residues cysteine 33, cysteine 39, cysteine 42, and cysteine 77 each coordinate [2Fe-2S] cluster.

The cofactor is [2Fe-2S] cluster.

It is found in the chlorosome. Could play a direct role in the oxidation or reduction of the quenching species formed in the chlorosome. In Chlorobaculum tepidum (strain ATCC 49652 / DSM 12025 / NBRC 103806 / TLS) (Chlorobium tepidum), this protein is Chlorosome protein J (csmJ).